A 547-amino-acid chain; its full sequence is Probable pectinesterase/pectinesterase inhibitor 12 (547 aa).

The signal sequence occupies residues 1–23 (MALSSFNLSSLLFLLFFTPSVFS). The pectinesterase inhibitor 12 stretch occupies residues 31–185 (NPHETSATSF…YKHISNSLSA (155 aa)). N-linked (GlcNAc...) asparagine glycosylation is found at N131, N247, N260, and N303. The segment at 237-533 (SLVVAADGTG…FTATEFITGD (297 aa)) is pectinesterase 12. Substrate contacts are provided by T312 and Q342. D365 (proton donor; for pectinesterase activity) is an active-site residue. C379 and C399 are disulfide-bonded. Residue D386 is the Nucleophile; for pectinesterase activity of the active site. N432 and N443 each carry an N-linked (GlcNAc...) asparagine glycan. Substrate contacts are provided by R454 and W456. Residue N523 is glycosylated (N-linked (GlcNAc...) asparagine).

This sequence in the N-terminal section; belongs to the PMEI family. In the C-terminal section; belongs to the pectinesterase family. In terms of tissue distribution, expressed in siliques.

It is found in the secreted. It localises to the cell wall. It catalyses the reaction [(1-&gt;4)-alpha-D-galacturonosyl methyl ester](n) + n H2O = [(1-&gt;4)-alpha-D-galacturonosyl](n) + n methanol + n H(+). The protein operates within glycan metabolism; pectin degradation; 2-dehydro-3-deoxy-D-gluconate from pectin: step 1/5. Acts in the modification of cell walls via demethylesterification of cell wall pectin. In Arabidopsis thaliana (Mouse-ear cress), this protein is Probable pectinesterase/pectinesterase inhibitor 12 (PME12).